Here is a 331-residue protein sequence, read N- to C-terminus: Protein C10 (331 aa).

The protein belongs to the poxviridae C4/C10 protein family.

In Vaccinia virus (strain Copenhagen) (VACV), this protein is Protein C10.